Consider the following 111-residue polypeptide: Probable 4-amino-4-deoxy-L-arabinose-phosphoundecaprenol flippase subunit ArnE (111 aa).

Over 1 to 37 the chain is Cytoplasmic; that stretch reads MIWLVLILASLLSVTGQLCQKQATRPVAINKRRKHIA. The helical transmembrane segment at 38–58 threads the bilayer; that stretch reads LWLGLGLVCLGLAMVLWLLVL. One can recognise an EamA domain in the interval 40-109; the sequence is LGLGLVCLGL…IIGGIVILGS (70 aa). Over 59–60 the chain is Periplasmic; that stretch reads QT. The helical transmembrane segment at 61–81 threads the bilayer; sequence VPVGIAYPMLSLNFVWVTLAA. Residues 82–87 lie on the Cytoplasmic side of the membrane; the sequence is TKLWHE. A helical transmembrane segment spans residues 88-108; the sequence is PVSFRHWCGVAFIIGGIVILG. The Periplasmic segment spans residues 109-111; that stretch reads STV.

Belongs to the ArnE family. As to quaternary structure, heterodimer of ArnE and ArnF.

It localises to the cell inner membrane. Its pathway is bacterial outer membrane biogenesis; lipopolysaccharide biosynthesis. Its function is as follows. Translocates 4-amino-4-deoxy-L-arabinose-phosphoundecaprenol (alpha-L-Ara4N-phosphoundecaprenol) from the cytoplasmic to the periplasmic side of the inner membrane. This Escherichia fergusonii (strain ATCC 35469 / DSM 13698 / CCUG 18766 / IAM 14443 / JCM 21226 / LMG 7866 / NBRC 102419 / NCTC 12128 / CDC 0568-73) protein is Probable 4-amino-4-deoxy-L-arabinose-phosphoundecaprenol flippase subunit ArnE.